The chain runs to 180 residues: Large ribosomal subunit protein uL5 (180 aa).

Belongs to the universal ribosomal protein uL5 family. In terms of assembly, part of the 50S ribosomal subunit; part of the 5S rRNA/L5/L18/L25 subcomplex. Contacts the 5S rRNA and the P site tRNA. Forms a bridge to the 30S subunit in the 70S ribosome.

Its function is as follows. This is one of the proteins that bind and probably mediate the attachment of the 5S RNA into the large ribosomal subunit, where it forms part of the central protuberance. In the 70S ribosome it contacts protein S13 of the 30S subunit (bridge B1b), connecting the 2 subunits; this bridge is implicated in subunit movement. Contacts the P site tRNA; the 5S rRNA and some of its associated proteins might help stabilize positioning of ribosome-bound tRNAs. This is Large ribosomal subunit protein uL5 from Anaeromyxobacter sp. (strain Fw109-5).